The following is a 39-amino-acid chain: Potassium channel toxin alpha-KTx 2.9 (39 aa).

3 cysteine pairs are disulfide-bonded: Cys7/Cys29, Cys13/Cys34, and Cys17/Cys36. Asn39 carries the post-translational modification Asparagine amide.

The protein belongs to the short scorpion toxin superfamily. Potassium channel inhibitor family. Alpha-KTx 02 subfamily. In terms of tissue distribution, expressed by the venom gland.

The protein resides in the secreted. Functionally, blocks Kv1.3/KCNA3 voltage-gated potassium channels of human T-lymphocytes (Kd=0.25 nM). The chain is Potassium channel toxin alpha-KTx 2.9 from Centruroides elegans (Bark scorpion).